Consider the following 236-residue polypeptide: 2-C-methyl-D-erythritol 4-phosphate cytidylyltransferase (236 aa).

This sequence belongs to the IspD/TarI cytidylyltransferase family. IspD subfamily. In terms of assembly, homodimer.

The enzyme catalyses 2-C-methyl-D-erythritol 4-phosphate + CTP + H(+) = 4-CDP-2-C-methyl-D-erythritol + diphosphate. It functions in the pathway isoprenoid biosynthesis; isopentenyl diphosphate biosynthesis via DXP pathway; isopentenyl diphosphate from 1-deoxy-D-xylulose 5-phosphate: step 2/6. Functionally, catalyzes the formation of 4-diphosphocytidyl-2-C-methyl-D-erythritol from CTP and 2-C-methyl-D-erythritol 4-phosphate (MEP). This chain is 2-C-methyl-D-erythritol 4-phosphate cytidylyltransferase, found in Klebsiella pneumoniae subsp. pneumoniae (strain ATCC 700721 / MGH 78578).